We begin with the raw amino-acid sequence, 278 residues long: 4-diphosphocytidyl-2-C-methyl-D-erythritol kinase (278 aa).

Lys-9 is a catalytic residue. 93–103 (PLGGGLGGGSS) contributes to the ATP binding site. Asp-135 is an active-site residue.

It belongs to the GHMP kinase family. IspE subfamily.

The catalysed reaction is 4-CDP-2-C-methyl-D-erythritol + ATP = 4-CDP-2-C-methyl-D-erythritol 2-phosphate + ADP + H(+). It participates in isoprenoid biosynthesis; isopentenyl diphosphate biosynthesis via DXP pathway; isopentenyl diphosphate from 1-deoxy-D-xylulose 5-phosphate: step 3/6. Catalyzes the phosphorylation of the position 2 hydroxy group of 4-diphosphocytidyl-2C-methyl-D-erythritol. This chain is 4-diphosphocytidyl-2-C-methyl-D-erythritol kinase, found in Nitrosomonas europaea (strain ATCC 19718 / CIP 103999 / KCTC 2705 / NBRC 14298).